The following is an 8515-amino-acid chain: Nonribosomal peptide synthetase 8 (8515 aa).

2 adenylation regions span residues 59–736 and 1163–1705; these read REHH…YRCS and AKLS…EWVE. Residues 587–1159 form a condensation 1 region; the sequence is RRVVQWLENL…TVGEVALVGD (573 aa). The Carrier 1 domain occupies 615–691; the sequence is EPETAMERRL…ELAPRVKVAE (77 aa). Residue S652 is modified to O-(pantetheine 4'-phosphoryl)serine. The Carrier 2 domain occupies 1732–1808; sequence RGLTPTETVI…KLGRHADHSS (77 aa). O-(pantetheine 4'-phosphoryl)serine is present on S1769. An epimerase 1 region spans residues 1830 to 2273; it reads LSPIQQWFFE…TLYDCPLAAL (444 aa). Positions 2301-2709 are condensation 2; that stretch reads SHIQEGILLS…RSPEAVLHDL (409 aa). Residues 2733-3266 form an adenylation 3 region; it reads QCLHWLIEQW…RMILSWLSEP (534 aa). The region spanning 3286–3362 is the Carrier 3 domain; the sequence is TTLGPVEKQM…KVTPRTISLS (77 aa). S3323 bears the O-(pantetheine 4'-phosphoryl)serine mark. Residues 3406–3819 are condensation 3; it reads SPMQEGILLA…DNSGCSVKTV (414 aa). Residues 3857-3933 enclose the Carrier 4 domain; it reads EPTNLIALTV…EVFEHARFSD (77 aa). Residue S3894 is modified to O-(pantetheine 4'-phosphoryl)serine. The tract at residues 3953 to 4392 is epimerase 2; it reads LSPIQKLHFH…TPSDFQLLSL (440 aa). Residues 4420–4823 are condensation 4; sequence PCSPMQEGIL…ARPRARLGTI (404 aa). Residues 4837–5363 form an adenylation 4 region; the sequence is WNEQARRPVV…RKVNKWLESF (527 aa). Residues 5385-5461 enclose the Carrier 5 domain; the sequence is PPLTPIQQTI…SLAACATAII (77 aa). Residue S5422 is modified to O-(pantetheine 4'-phosphoryl)serine. Residues 5508–5923 are condensation 5; sequence SPMQEGILFS…SLVDHLSLCS (416 aa). An adenylation 5 region spans residues 5941–6459; the sequence is ELRQCLHELI…GKVDRQALRR (519 aa). The region spanning 6482–6558 is the Carrier 6 domain; the sequence is PISTAEEQQM…DLATLLESPA (77 aa). At S6519 the chain carries O-(pantetheine 4'-phosphoryl)serine. A condensation 6 region spans residues 6606 to 6992; that stretch reads CTPLQESLMA…SQMKSVMGTL (387 aa). Residues 7030–7544 form an adenylation 6 region; the sequence is VEDLIISRAQ…SSGKLARKGV (515 aa). One can recognise a Carrier 7 domain in the interval 7575 to 7651; the sequence is IASSSVERAI…HLASREDLTA (77 aa). Residue S7612 is modified to O-(pantetheine 4'-phosphoryl)serine. The epimerase 3 stretch occupies residues 7670–8119; that stretch reads LTPIQRFFFC…DYPRARLDYT (450 aa). Residues 8164-8504 are condensation 7; the sequence is HFIWKIAGTK…DPTSPLQFAD (341 aa). Polar residues predominate over residues 8488–8500; it reads AVNSVSSDPTSPL. The disordered stretch occupies residues 8488–8515; it reads AVNSVSSDPTSPLQFADGQDPMPVSHQP.

Belongs to the NRP synthetase family.

In terms of biological role, nonribosomal peptide synthesis (NRPS) is a key mechanism responsible for the biosynthesis of bioactive metabolites which are potentially contributing to organismal virulence. However, contarary to other nonribosomal peptide synthases, NRPS8 does not encode a secreted peptide, but has more a structural role since it is involved in germ tube formation. This is Nonribosomal peptide synthetase 8 (NRPS8) from Aspergillus fumigatus (strain ATCC MYA-4609 / CBS 101355 / FGSC A1100 / Af293) (Neosartorya fumigata).